The following is a 245-amino-acid chain: Eukaryotic translation initiation factor 3 subunit K (245 aa).

The region spanning 46–227 is the PCI domain; it reads YDCYANLALL…EAKGTVVREN (182 aa).

This sequence belongs to the eIF-3 subunit K family. Component of the eukaryotic translation initiation factor 3 (eIF-3) complex.

Its subcellular location is the cytoplasm. Its function is as follows. Component of the eukaryotic translation initiation factor 3 (eIF-3) complex, which is involved in protein synthesis of a specialized repertoire of mRNAs and, together with other initiation factors, stimulates binding of mRNA and methionyl-tRNAi to the 40S ribosome. The eIF-3 complex specifically targets and initiates translation of a subset of mRNAs involved in cell proliferation. In Botryotinia fuckeliana (strain B05.10) (Noble rot fungus), this protein is Eukaryotic translation initiation factor 3 subunit K.